We begin with the raw amino-acid sequence, 1951 residues long: Sodium channel protein type 3 subunit alpha (1951 aa).

Over 1–128 (MAQALLVPPG…KIAIKILVHS (128 aa)) the chain is Cytoplasmic. The interval 28 to 60 (RAAEEKAKKPKKEQDIDDENKPKPNSDLEAGKN) is disordered. Positions 46–57 (ENKPKPNSDLEA) are enriched in basic and acidic residues. The stretch at 110–455 (ILTPLNPVRK…QQMLEQLKKQ (346 aa)) is one I repeat. A helical membrane pass occupies residues 129–146 (LFSMLIMCTILTNCVFMT). Residues 147 to 152 (LSNPPD) lie on the Extracellular side of the membrane. A helical transmembrane segment spans residues 153-174 (WTKNVEYTFTGIYTFESLIKIL). Over 175–188 (ARGFCLEDFTFLRD) the chain is Cytoplasmic. The helical transmembrane segment at 189 to 206 (PWNWLDFSVIVMAYVTEF) threads the bilayer. At 207–213 (VDLGNVS) the chain is on the extracellular side. Asn-211 carries an N-linked (GlcNAc...) asparagine glycan. Residues 214 to 235 (ALRTFRVLRALKTISVIPGLKT) form a helical membrane-spanning segment. Topologically, residues 236–249 (IVGALIQSVKKLSD) are cytoplasmic. A helical transmembrane segment spans residues 250–269 (VMILTVFCLSVFALIGLQLF). Residues 270–369 (MGNLRNKCSQ…NYGYTSFDTF (100 aa)) lie on the Extracellular side of the membrane. N-linked (GlcNAc...) asparagine glycosylation is found at Asn-290, Asn-296, Asn-302, Asn-307, and Asn-339. Residues 370-386 (SWAFLSLFRLMTQDYWE) constitute an intramembrane region (pore-forming). At 387-397 (NLYQLTLRAAG) the chain is on the extracellular side. The chain crosses the membrane as a helical span at residues 398–424 (KTYMIFFVLVIFLGSFYLVNLILAVVA). The Cytoplasmic segment spans residues 425–712 (MAYEEQNQAT…LVNLIVMDPF (288 aa)). Ser-484, Ser-485, and Ser-486 each carry phosphoserine. 2 disordered regions span residues 493–529 (SKSA…SESE) and 587–633 (VGSE…TEVR). Basic residues predominate over residues 500-509 (RNRRKKRRQR). 2 stretches are compositionally biased toward basic and acidic residues: residues 510–529 (EHLE…SESE) and 596–622 (DEHS…ERRN). An II repeat occupies 693–965 (CCDAWLKVKH…QIAVGRMQKG (273 aa)). The chain crosses the membrane as a helical span at residues 713-730 (VDLAITICIVLNTLFMAM). Residues 731 to 738 (EHYPMTQQ) lie on the Extracellular side of the membrane. A helical membrane pass occupies residues 739–763 (FSSVLTVGNLVFTGIFTAEMVLKII). Residues 764–773 (AMDPYYYFQE) are Cytoplasmic-facing. The helical transmembrane segment at 774–793 (GWNIFDGIIVSLSLMELGLA) threads the bilayer. Residues 794-797 (NVEG) lie on the Extracellular side of the membrane. The helical transmembrane segment at 798 to 816 (LSVLRSFRLLRVFKLAKSW) threads the bilayer. Residues 817 to 834 (PTLNMLIKIIGNSVGALG) lie on the Cytoplasmic side of the membrane. Residues 835-855 (NLTLVLAIIVFIFAVVGMQLF) traverse the membrane as a helical segment. Residues 856–880 (GKSYKECVCKINVDCKLPRWHMNDF) lie on the Extracellular side of the membrane. Cys-864 and Cys-870 are joined by a disulfide. The segment at residues 881-896 (FHSFLIVFRVLCGEWI) is an intramembrane region (pore-forming). Over 897-907 (ETMWDCMEVAG) the chain is Extracellular. Cys-902 and Cys-911 are oxidised to a cystine. A helical transmembrane segment spans residues 908 to 934 (QTMCLIVFMLVMVIGNLVVLNLFLALL). The Cytoplasmic segment spans residues 935 to 1156 (LSSFSSDNLA…RKTCYSIVEH (222 aa)). Residues 1068-1112 (TEEFSSESELEESKEKLNATSSSEGSTVDVAPPREGEQAEIEPEE) form a disordered region. Residues 1139 to 1450 (KGKIWWNLRK…KKYYNAMKKL (312 aa)) form an III repeat. A helical membrane pass occupies residues 1157–1177 (NWFETFIVFMILLSSGALAFE). Topologically, residues 1178–1189 (DIYIEQRKTIKT) are extracellular. Residues 1190 to 1211 (MLEYADKVFTYIFILEMLLKWV) form a helical membrane-spanning segment. Topologically, residues 1212–1217 (AYGFQT) are cytoplasmic. A helical transmembrane segment spans residues 1218–1243 (YFTNAWCWLDFLIVDVSLVSLVANAL). Topologically, residues 1244-1252 (GYSELGAIK) are extracellular. Residues 1253–1271 (SLRTLRALRPLRALSRFEG) form a helical membrane-spanning segment. Residues 1272–1284 (MRVVVNALVGAIP) lie on the Cytoplasmic side of the membrane. The chain crosses the membrane as a helical span at residues 1285–1307 (SIMNVLLVCLIFWLIFSIMGVNL). The Extracellular portion of the chain corresponds to 1308-1353 (FAGKFYHCVNTTTGNMFEIKEVNNFSDCQALGKQARWKNVKVNFDN). Cys-1315 and Cys-1335 are oxidised to a cystine. Asn-1317 and Asn-1331 each carry an N-linked (GlcNAc...) asparagine glycan. An intramembrane region (pore-forming) is located at residues 1354-1370 (VGAGYLALLQVATFKGW). At 1371–1393 (MDIMYAAVDSRDVKLQPIYEENL) the chain is on the extracellular side. Residues 1394–1419 (YMYLYFVIFIIFGSFFTLNLFIGVII) traverse the membrane as a helical segment. Topologically, residues 1420-1477 (DNFNQQKKKFGGQDIFMTEEQKKYYNAMKKLGSKKPQKPIPRPANKFQGMVFDFVTRQ) are cytoplasmic. Residue Ser-1452 is modified to Phosphoserine; by PKC. The IV repeat unit spans residues 1459-1757 (IPRPANKFQG…WEKFDPDATQ (299 aa)). The chain crosses the membrane as a helical span at residues 1478–1496 (VFDISIMILICLNMVTMMV). The Extracellular portion of the chain corresponds to 1497 to 1504 (ETDDQSKY). The helical transmembrane segment at 1505 to 1528 (MTLVLSRINLVFIVLFTGEFLLKL) threads the bilayer. The Cytoplasmic portion of the chain corresponds to 1529-1538 (ISLRYYYFTI). A helical transmembrane segment spans residues 1539–1556 (GWNIFDFVVVILSIVGMF). Residues 1557 to 1568 (LAELIEKYFVSP) are Extracellular-facing. Residues 1569–1591 (TLFRVIRLARIGRILRLIKGAKG) traverse the membrane as a helical segment. The Cytoplasmic segment spans residues 1592-1604 (IRTLLFALMMSLP). A helical transmembrane segment spans residues 1605-1628 (ALFNIGLLLFLVMFIYAIFGMSNF). Over 1629-1650 (AYVKKEAGIDDMFNFETFGNSM) the chain is Extracellular. An intramembrane region (pore-forming) is located at residues 1651–1663 (ICLFQITTSAGWD). Topologically, residues 1664–1695 (GLLAPILNSAPPDCDPDAIHPGSSVKGDCGNP) are extracellular. A helical membrane pass occupies residues 1696–1721 (SVGIFFFVSYIIISFLVVVNMYIAVI). Topologically, residues 1722-1951 (LENFSVATEE…KGKEVRENQK (230 aa)) are cytoplasmic. The IQ domain occupies 1851–1880 (EEVSAAIIQRNYRCYLLKQRLKNISSKYDK). Residues 1898-1951 (DKLNGNSTPEKTDGSSSTTSPPSYDSVTKPDKEKFEKDKPEKEIKGKEVRENQK) form a disordered region. The segment covering 1925 to 1951 (TKPDKEKFEKDKPEKEIKGKEVRENQK) has biased composition (basic and acidic residues).

Belongs to the sodium channel (TC 1.A.1.10) family. Nav1.3/SCN3A subfamily. As to quaternary structure, heterooligomer of an alpha subunit, SCN3A, and 1 to 3 regulatory beta subunits including SCN1B and SCN2B; disulfide-linked with some beta subunits like SCN2B. Interacts with NEDD4L; could regulate expression of SCN3A at the plasma membrane through ubiquitination-regulated endocytosis. Interacts with the conotoxin GVIIJ. Interacts with the spider beta/delta-theraphotoxin-Pre1a. Interacts with the spider RTX-VII toxin (AC P0DL75). In terms of processing, may be ubiquitinated by NEDD4L; which would promote its endocytosis. Post-translationally, phosphorylation at Ser-1452 by PKC in a highly conserved cytoplasmic loop slows inactivation of the sodium channel and reduces peak sodium currents.

The protein resides in the cell membrane. The protein localises to the basal cell membrane. The catalysed reaction is Na(+)(in) = Na(+)(out). Functionally, pore-forming subunit of Nav1.3, a voltage-gated sodium (Nav) channel that directly mediates the depolarizing phase of action potentials in excitable membranes. Navs, also called VGSCs (voltage-gated sodium channels) or VDSCs (voltage-dependent sodium channels), operate by switching between closed and open conformations depending on the voltage difference across the membrane. In the open conformation they allow Na(+) ions to selectively pass through the pore, along their electrochemical gradient. The influx of Na+ ions provokes membrane depolarization, initiating the propagation of electrical signals throughout cells and tissues. In some secretory cell types, it also participates in cell excitability through membrane depolarization and regulates cells responsiveness to stimuli triggering secretion. For instance, it controls the release of serotonin/5-hydroxytryptamine by enterochromaffin cells and is required for both glucagon- and glucose-induced insulin secretion in pancreatic endocrine cells. This chain is Sodium channel protein type 3 subunit alpha, found in Rattus norvegicus (Rat).